Reading from the N-terminus, the 620-residue chain is Nuclear cap-binding protein subunit 3 (620 aa).

Residue Lys12 forms a Glycyl lysine isopeptide (Lys-Gly) (interchain with G-Cter in SUMO2) linkage. A compositionally biased stretch (low complexity) spans 15–28 (APAGPALGLPSPEA). The disordered stretch occupies residues 15–42 (APAGPALGLPSPEAESGVDRGEPEPMEV). Ser25 is subject to Phosphoserine. Residue Lys70 forms a Glycyl lysine isopeptide (Lys-Gly) (interchain with G-Cter in SUMO2) linkage. The residue at position 73 (Ser73) is a Phosphoserine. The RNA recognition motif (RRM) domain stretch occupies residues 126 to 187 (ETIYICGVDE…MSSLPAQDKI (62 aa)). Positions 155–158 (WLDD) match the WLDD motif; essential for 7-methylguanosine-containing mRNA cap binding motif. A compositionally biased stretch (basic and acidic residues) spans 185-198 (DKIRSRDASEDKSA). 3 disordered regions span residues 185 to 233 (DKIR…LDTL), 332 to 419 (HSGL…PKKS), and 436 to 620 (IRNS…EAES). Residue Lys186 forms a Glycyl lysine isopeptide (Lys-Gly) (interchain with G-Cter in SUMO2) linkage. Phosphoserine is present on residues Ser209 and Ser210. 2 stretches are compositionally biased toward acidic residues: residues 209–230 (SSDD…DVEL) and 341–365 (EPIE…DMDA). The segment covering 366-388 (DDRVVVEYHEELPALKQPRERSA) has biased composition (basic and acidic residues). Residue Thr413 is modified to Phosphothreonine. Ser415 carries the post-translational modification Phosphoserine. Composition is skewed to basic and acidic residues over residues 459–474 (PPEK…DEKR) and 511–521 (VRREPSSDVHS). Lys541 is covalently cross-linked (Glycyl lysine isopeptide (Lys-Gly) (interchain with G-Cter in SUMO2)). Composition is skewed to basic and acidic residues over residues 554–569 (KTKE…RAPG) and 585–598 (IKEK…KSRL). A compositionally biased stretch (low complexity) spans 611-620 (ESSSGSEAES). Residue Ser620 is modified to Phosphoserine.

Belongs to the NCBP3 family. Component of an alternative cap-binding complex (CBC) composed of NCBP1/CBP80 and NCBP3. Interacts with SRRT, KPNA3, THOC5 and EIF4A3.

It is found in the nucleus. It localises to the cytoplasm. Associates with NCBP1/CBP80 to form an alternative cap-binding complex (CBC) which plays a key role in mRNA export. NCBP3 serves as adapter protein linking the capped RNAs (m7GpppG-capped RNA) to NCBP1/CBP80. Unlike the conventional CBC with NCBP2 which binds both small nuclear RNA (snRNA) and messenger (mRNA) and is involved in their export from the nucleus, the alternative CBC with NCBP3 does not bind snRNA and associates only with mRNA thereby playing a role in only mRNA export. The alternative CBC is particularly important in cellular stress situations such as virus infections and the NCBP3 activity is critical to inhibit virus growth. The sequence is that of Nuclear cap-binding protein subunit 3 from Homo sapiens (Human).